A 418-amino-acid polypeptide reads, in one-letter code: Protein-lysine N-trimethyltransferase SMYD5 (418 aa).

The SET domain maps to 21-352 (VSVEVRFVSS…PGEEICISYL (332 aa)). An MYND-type zinc finger spans residues 98–136 (PELCTVRKDLHQNCPHCQVMYCSAECRLAATEQYHQVLC). Tyrosine 351 contributes to the S-adenosyl-L-methionine binding site. Positions 385–418 (ADEPNVTSEEEEEEEEEEEGEPEDAELGDEMTDV) are disordered.

It belongs to the class V-like SAM-binding methyltransferase superfamily. In terms of assembly, interacts with the N-CoR complex. Interacts with EHMT2 and CBX5. In terms of processing, ubiquitinated and degradaed by the proteasome in response to mild hypothermia (32 degrees Celsius), relieving repression of the SP1 gene.

Its subcellular location is the cytoplasm. It catalyses the reaction L-lysyl-[protein] + 3 S-adenosyl-L-methionine = N(6),N(6),N(6)-trimethyl-L-lysyl-[protein] + 3 S-adenosyl-L-homocysteine + 3 H(+). The catalysed reaction is L-lysyl(20)-[histone H4] + 3 S-adenosyl-L-methionine = N(6),N(6),N(6)-trimethyl-L-lysyl(20)-[histone H4] + 3 S-adenosyl-L-homocysteine + 3 H(+). It carries out the reaction L-lysyl(36)-[histone H3] + 3 S-adenosyl-L-methionine = N(6),N(6),N(6)-trimethyl-L-lysyl(36)-[histone H3] + 3 S-adenosyl-L-homocysteine + 3 H(+). In terms of biological role, protein-lysine N-trimethyltransferase that specifically catalyzes trimethylation of 'Lys-22' of the RPL40/eL40 subunit of the 60S ribosome, thereby promoting translation elongation and protein synthesis. May also act as a histone methyltransferase in the context of histone octamers, but not on nucleosome substrates: trimethylates 'Lys-36' of histone H3 and 'Lys-20' of histone H4 to form H3K36me3 and H4K20me3, respectively. The histone methyltransferase activity, which is independent of its SET domain, is however unsure in vivo. In association with the NCoR corepressor complex, involved in the repression of toll-like receptor 4 (TLR4)-target inflammatory genes in macrophages, possibly by catalyzing the formation of H4K20me3 at the gene promoters. Plays an important role in embryonic stem (ES) cell self-renewal and differentiation. Maintains genome stability of ES cells during differentiation through regulation of heterochromatin formation and repression of endogenous repetitive DNA elements by promoting H4K20me3 marks. Acts as a regulator of the hypothermia response: its degradation in response to mild hypothermia relieves the formation of H3K36me3 at gene promoters, allowing expression of the neuroprotective gene SP1. In Homo sapiens (Human), this protein is Protein-lysine N-trimethyltransferase SMYD5.